We begin with the raw amino-acid sequence, 404 residues long: MSDIKKVVLAYSGGLDTSVILKWLQVTYNCEVVTFTADLGQGEELEPARAKAKLMGVPDHHIYIDDLREEFVRDFVFPMMRANARYEGDYLLGTSIARPLISKRLIEIARETGADAVAHGATGKGNDQVRFELSAYALEPGIKVIAPWREWDLTSRTALIAWAEAHQIPVPKDKRGESPFSTDANLLHTSSEGKVLEDPWQETPDYVYSRTVNPEDAPDTPEYITIDFEKGDGVALNGEAMSPATLLAALNDLGRKHGIGRLDLVENRFVGMKSRGMYETPGGEIYARAHRGIESITLDRGAAHLKDELMPKYAELIYNGFWFSPEREMLQAAIDHSQARVNGTVRLKLYKGSASVVGRKSPDSLYSERHVTFEDDAGAYDQKDAAGFIKLNALRLRLLAQQGR.

Residues 10–18 (AYSGGLDTS) and Ala37 each bind ATP. The L-citrulline site is built by Tyr90 and Ser95. Gly120 lines the ATP pocket. L-aspartate contacts are provided by Thr122, Asn126, and Asp127. Asn126 is a binding site for L-citrulline. Positions 130, 181, 190, 266, and 278 each coordinate L-citrulline. The disordered stretch occupies residues 173-200 (DKRGESPFSTDANLLHTSSEGKVLEDPW). Residues 179 to 192 (PFSTDANLLHTSSE) show a composition bias toward polar residues.

It belongs to the argininosuccinate synthase family. Type 1 subfamily. Homotetramer.

It localises to the cytoplasm. The enzyme catalyses L-citrulline + L-aspartate + ATP = 2-(N(omega)-L-arginino)succinate + AMP + diphosphate + H(+). It functions in the pathway amino-acid biosynthesis; L-arginine biosynthesis; L-arginine from L-ornithine and carbamoyl phosphate: step 2/3. The chain is Argininosuccinate synthase from Novosphingobium aromaticivorans (strain ATCC 700278 / DSM 12444 / CCUG 56034 / CIP 105152 / NBRC 16084 / F199).